Reading from the N-terminus, the 230-residue chain is 2,3-bisphosphoglycerate-dependent phosphoglycerate mutase (230 aa).

Residues 8-15 (RHGQSIWN), 21-22 (TG), R60, 87-90 (ERHY), K98, and 114-115 (RR) contribute to the substrate site. The active-site Tele-phosphohistidine intermediate is H9. E87 acts as the Proton donor/acceptor in catalysis. Residues 117–143 (YDTPPPALDAEDERHPRHDPRYAGLDP) are disordered. Basic and acidic residues predominate over residues 128 to 137 (DERHPRHDPR). 183-184 (GN) contacts substrate.

This sequence belongs to the phosphoglycerate mutase family. BPG-dependent PGAM subfamily. As to quaternary structure, homodimer.

The catalysed reaction is (2R)-2-phosphoglycerate = (2R)-3-phosphoglycerate. It functions in the pathway carbohydrate degradation; glycolysis; pyruvate from D-glyceraldehyde 3-phosphate: step 3/5. Catalyzes the interconversion of 2-phosphoglycerate and 3-phosphoglycerate. This Halorhodospira halophila (strain DSM 244 / SL1) (Ectothiorhodospira halophila (strain DSM 244 / SL1)) protein is 2,3-bisphosphoglycerate-dependent phosphoglycerate mutase.